Consider the following 48-residue polypeptide: MLLKNWPSRRIQRDKSKRAGIGGTNNRIPYTLLLCYVNVQKPFRIVDL.

The segment at 1 to 20 (MLLKNWPSRRIQRDKSKRAG) is disordered.

This is an uncharacterized protein from Bacillus subtilis (strain 168).